The primary structure comprises 514 residues: Glutathione-binding protein GsiB (514 aa).

Positions Met1–Ala27 are cleaved as a signal peptide.

Belongs to the bacterial solute-binding protein 5 family. The complex is composed of two ATP-binding proteins (GsiA), two transmembrane proteins (GsiC and GsiD) and a solute-binding protein (GsiB).

The protein resides in the periplasm. Functionally, part of the ABC transporter complex GsiABCD involved in glutathione import. Binds glutathione. In Pectobacterium atrosepticum (strain SCRI 1043 / ATCC BAA-672) (Erwinia carotovora subsp. atroseptica), this protein is Glutathione-binding protein GsiB.